The sequence spans 658 residues: Carnitine O-palmitoyltransferase 2, mitochondrial (658 aa).

Residues 1–25 (MMPRLLLRDWPRCPSLVLGAPSRPL) constitute a mitochondrion transit peptide. Residues 26–178 (SAVSGPAEYL…GLLEPEVFHL (153 aa)) lie on the Mitochondrial matrix side of the membrane. Residue lysine 69 is modified to N6-succinyllysine. Lysine 79 bears the N6-acetyllysine mark. The residue at position 85 (lysine 85) is an N6-succinyllysine. Positions 179-208 (NPARSDTDAFKRLIRFVPSSLSWYGAYLVN) form an intramembrane region, note=Mitochondrial inner membrane. Over 209–658 (AYPLDMSQYF…DALEGKAIKT (450 aa)) the chain is Mitochondrial matrix. Lysine 239 carries the post-translational modification N6-acetyllysine; alternate. Lysine 239 is subject to N6-succinyllysine; alternate. Lysine 305 is modified (N6-acetyllysine). Histidine 372 serves as the catalytic Proton acceptor. Lysine 418 carries the post-translational modification N6-acetyllysine; alternate. N6-succinyllysine; alternate is present on lysine 418. Residues lysine 424 and lysine 439 each carry the N6-succinyllysine modification. 452–464 (GKEFLKKKKLSPD) provides a ligand contact to CoA. Tyrosine 486, serine 488, and threonine 499 together coordinate (R)-carnitine. 2 positions are modified to N6-acetyllysine; alternate: lysine 510 and lysine 544. An N6-succinyllysine; alternate mark is found at lysine 510 and lysine 544.

The protein belongs to the carnitine/choline acetyltransferase family.

The protein resides in the mitochondrion inner membrane. It catalyses the reaction (R)-carnitine + hexadecanoyl-CoA = O-hexadecanoyl-(R)-carnitine + CoA. The enzyme catalyses octanoyl-CoA + (R)-carnitine = O-octanoyl-(R)-carnitine + CoA. The catalysed reaction is decanoyl-CoA + (R)-carnitine = O-decanoyl-(R)-carnitine + CoA. It carries out the reaction dodecanoyl-CoA + (R)-carnitine = O-dodecanoyl-R-carnitine + CoA. It catalyses the reaction tetradecanoyl-CoA + (R)-carnitine = O-tetradecanoyl-(R)-carnitine + CoA. The enzyme catalyses (R)-carnitine + octadecanoyl-CoA = O-octadecanoyl-(R)-carnitine + CoA. The catalysed reaction is eicosanoyl-CoA + (R)-carnitine = O-eicosanoyl-(R)-carnitine + CoA. It carries out the reaction (9Z)-tetradecenoyl-CoA + (R)-carnitine = O-(9Z)-tetradecenoyl-(R)-carnitine + CoA. It catalyses the reaction (5Z)-tetradecenoyl-CoA + (R)-carnitine = O-(5Z)-tetradecenoyl-(R)-carnitine + CoA. The enzyme catalyses (R)-carnitine + (9Z)-octadecenoyl-CoA = O-(9Z)-octadecenoyl-(R)-carnitine + CoA. The catalysed reaction is 4,8-dimethylnonanoyl-CoA + (R)-carnitine = O-4,8-dimethylnonanoyl-(R)-carnitine + CoA. It participates in lipid metabolism; fatty acid beta-oxidation. Involved in the intramitochondrial synthesis of acylcarnitines from accumulated acyl-CoA metabolites. Reconverts acylcarnitines back into the respective acyl-CoA esters that can then undergo beta-oxidation, an essential step for the mitochondrial uptake of long-chain fatty acids and their subsequent beta-oxidation in the mitochondrion. Active with medium (C8-C12) and long-chain (C14-C18) acyl-CoA esters. This is Carnitine O-palmitoyltransferase 2, mitochondrial from Mus musculus (Mouse).